Here is a 205-residue protein sequence, read N- to C-terminus: MRVYAAITLVLVANTAYIGVEAWGGLFNRFSPEMLSNLGYGGHGSYMNRPGLLQEGYDGIYGEGAEPTEEPCYERKCMYNDHCCPGSICMNFNGVTGTCVSDFGMTQGELCRRDSDCETGLMCAEMSGHEECAMSSECDISRGLCCQLQRRHRQAPRKVCSYFKDPLVCIGPVATDQIKSVIQYTSGEKRITGQGNRLFKRMPFA.

A signal peptide spans 1-15 (MRVYAAITLVLVANT). Propeptides lie at residues 16 to 188 (AYIG…TSGE) and 202 to 205 (MPFA).

Expressed throughout the nervous system (at protein level).

It is found in the secreted. The sequence is that of ITG-like peptide from Camponotus floridanus (Florida carpenter ant).